The following is an 870-amino-acid chain: Importin subunit beta-1 (870 aa).

A2 carries the post-translational modification N-acetylalanine. HEAT repeat units lie at residues 4–33, 35–67, 87–126, 132–161, 172–204, 214–249, 255–304, 313–361, 365–395, 403–440, 456–492, 498–535, 542–588, 596–637, 642–679, 684–722, 730–776, and 826–868; these read EVTQ…FQEQ, LAGF…KNAL, MSTK…ELPQ, LIVS…LCEE, VNKI…YMAL, DMER…IAST, AHYM…EFAG, FTKQ…RAVG, VPHV…GSIL, LMAI…IFEF, CQQI…EDIG, TPFF…EVVR, STMV…QVII, TKSK…AYAA, AKYM…CRAL, LPYC…ALAI, WRYS…FQGF, and SHVG…TRAI. Positions 23 to 103 constitute an Importin N-terminal domain; it reads AEESLKQFQE…RAFLLKTLSA (81 aa).

This sequence belongs to the importin beta family. Importin beta-1 subfamily. Forms a complex with the importin subunits alpha IMPA1 or IMPA2, the nucleoporin NUP62 and the Ran-GTP-binding proteins RAN1, RAN2 or RAN3. In terms of tissue distribution, expressed in roots, cotyledons, leaves, stems, petals, stamen, stigma, siliques, embryos and guard cells.

Its subcellular location is the cytoplasm. It localises to the nucleus. In terms of biological role, acts as a negative effector of drought tolerance. Involved in the regulation of stomatal closure and in the abscisic acid (ABA)-mediated pathway that lead to drought tolerance. Does not directly mediate nuclear import of ABI1 and ABI2 which are key regulators of the ABA signaling pathway. May be involved in nuclear translocation of other type 2C protein phosphatases that mediate ABA signaling. In Arabidopsis thaliana (Mouse-ear cress), this protein is Importin subunit beta-1.